A 466-amino-acid chain; its full sequence is Asparagine--tRNA ligase (466 aa).

This sequence belongs to the class-II aminoacyl-tRNA synthetase family. In terms of assembly, homodimer.

The protein localises to the cytoplasm. It catalyses the reaction tRNA(Asn) + L-asparagine + ATP = L-asparaginyl-tRNA(Asn) + AMP + diphosphate + H(+). The protein is Asparagine--tRNA ligase of Salmonella paratyphi A (strain ATCC 9150 / SARB42).